Consider the following 456-residue polypeptide: RNA polymerase II-associated protein 1 homolog (456 aa).

The interval 382 to 456 (LRSVEGSLNE…PVEQLQNEED (75 aa)) is disordered. Ser388 is subject to Phosphoserine. Basic and acidic residues predominate over residues 396-406 (EEKPAESREQL). Composition is skewed to polar residues over residues 408-433 (SAEQ…QANS) and 441-456 (GNTQ…NEED).

This sequence belongs to the PAF1 family.

The protein resides in the cytoplasm. It localises to the nucleus. This chain is RNA polymerase II-associated protein 1 homolog, found in Schizosaccharomyces pombe (strain 972 / ATCC 24843) (Fission yeast).